We begin with the raw amino-acid sequence, 523 residues long: Calcium uptake protein 3, mitochondrial (523 aa).

A mitochondrion-targeting transit peptide spans 1–6; the sequence is MAALRR. An EF-hand 1 domain is found at 226 to 261; that stretch reads PHAGFRIAFNMFDTDGNEMVDKKEFLVLQEIFRKKN. 6 residues coordinate Ca(2+): Asp-238, Asp-240, Asn-242, Met-244, Asp-246, and Glu-249. An EF-hand 2; degenerate domain is found at 395–430; it reads ENTSVFLENVRYSISEEKGITFDEFRSFFQFLNNLE. Positions 464 to 499 constitute an EF-hand 3 domain; the sequence is SPHLVNTVFKIFDVDKDDQLSYKEFIGIMKDRLHRG. Ca(2+) contacts are provided by Asp-476, Asp-478, Asp-480, Gln-482, and Glu-487.

The protein belongs to the MICU1 family. MICU3 subfamily. Heterodimer; disulfide-linked; heterodimerizes with MICU1. Heterodimerizes with isoform 3 of MICU1 (MICU1.1) in skeletal muscle. Component of the uniplex complex, composed of MCU, EMRE/SMDT1, MICU1 and MICU3 in a 4:4:1:1 stoichiometry. In terms of tissue distribution, predominantly expressed in skeletal muscle and central nervous system.

It is found in the mitochondrion intermembrane space. The protein localises to the mitochondrion inner membrane. Functionally, tissue-specific calcium sensor of the mitochondrial calcium uniporter (MCU) channel, which specifically regulates MCU channel activity in the central nervous system and skeletal muscle. Senses calcium level via its EF-hand domains: compared to MICU1 and MICU2, MICU3 has a higher affinity for calcium. MICU1 and MICU3 form a disulfide-linked heterodimer that stimulates and inhibits MCU activity, depending on the concentration of calcium. At low calcium levels, MICU1 occludes the pore of the MCU channel, preventing mitochondrial calcium uptake. At higher calcium levels, calcium-binding to MICU1 and MICU3 induces a conformational change that weakens MCU-MICU1 interactions and moves the MICU1-MICU3 heterodimer away from the pore, allowing calcium permeation through the MCU channel. The high calcium affinity of MICU3 lowers the calcium threshold necessary for calcium permeation through the MCU channel. The MICU1-MICU3 heterodimer promotes flexibility of neurotransmission in neuronal cells by enhancing mitochondrial calcium uptake in presynapses. It is also required to increase mitochondrial calcium uptake in skeletal muscle cells, thereby increasing ATP production. This is Calcium uptake protein 3, mitochondrial from Mus musculus (Mouse).